The sequence spans 312 residues: Light-independent protochlorophyllide reductase iron-sulfur ATP-binding protein (312 aa).

ATP contacts are provided by residues Gly55 to Thr60 and Lys84. Mg(2+) is bound at residue Ser59. Residues Cys140 and Cys174 each contribute to the [4Fe-4S] cluster site. ATP contacts are provided by residues Asn225–Arg226 and Pro249–Leu251.

The protein belongs to the NifH/BchL/ChlL family. Homodimer. Protochlorophyllide reductase is composed of three subunits; BchL, BchN and BchB. [4Fe-4S] cluster is required as a cofactor.

It catalyses the reaction chlorophyllide a + oxidized 2[4Fe-4S]-[ferredoxin] + 2 ADP + 2 phosphate = protochlorophyllide a + reduced 2[4Fe-4S]-[ferredoxin] + 2 ATP + 2 H2O. The protein operates within porphyrin-containing compound metabolism; bacteriochlorophyll biosynthesis (light-independent). In terms of biological role, component of the dark-operative protochlorophyllide reductase (DPOR) that uses Mg-ATP and reduced ferredoxin to reduce ring D of protochlorophyllide (Pchlide) to form chlorophyllide a (Chlide). This reaction is light-independent. The L component serves as a unique electron donor to the NB-component of the complex, and binds Mg-ATP. The sequence is that of Light-independent protochlorophyllide reductase iron-sulfur ATP-binding protein from Rhodopseudomonas palustris (strain HaA2).